A 519-amino-acid chain; its full sequence is 2-isopropylmalate synthase (519 aa).

In terms of domain architecture, Pyruvate carboxyltransferase spans 12-274; it reads VVIFDTTLRD…WCNVESTTLT (263 aa). Mn(2+) contacts are provided by Asp-21, His-209, His-211, and Asn-245. The tract at residues 398–519 is regulatory domain; sequence RLVSLTVIAG…QREAPVAAAS (122 aa).

The protein belongs to the alpha-IPM synthase/homocitrate synthase family. LeuA type 1 subfamily. Homodimer. It depends on Mn(2+) as a cofactor.

It localises to the cytoplasm. It carries out the reaction 3-methyl-2-oxobutanoate + acetyl-CoA + H2O = (2S)-2-isopropylmalate + CoA + H(+). It participates in amino-acid biosynthesis; L-leucine biosynthesis; L-leucine from 3-methyl-2-oxobutanoate: step 1/4. Functionally, catalyzes the condensation of the acetyl group of acetyl-CoA with 3-methyl-2-oxobutanoate (2-ketoisovalerate) to form 3-carboxy-3-hydroxy-4-methylpentanoate (2-isopropylmalate). The chain is 2-isopropylmalate synthase from Afipia carboxidovorans (strain ATCC 49405 / DSM 1227 / KCTC 32145 / OM5) (Oligotropha carboxidovorans).